The following is a 492-amino-acid chain: Beta-glucosidase 38 (492 aa).

An N-terminal signal peptide occupies residues 1–21 (MNMPLLLLIAIVVVSLSHGNG). Gln45 lines the a beta-D-glucoside pocket. 2 N-linked (GlcNAc...) asparagine glycosylation sites follow: Asn73 and Asn77. A beta-D-glucoside contacts are provided by residues His146 and 191–192 (NE). Residue Glu192 is the Proton donor of the active site. A disulfide bridge connects residues Cys211 and Cys214. N-linked (GlcNAc...) asparagine glycosylation occurs at Asn310. Tyr331 is an a beta-D-glucoside binding site. Asn341 is a glycosylation site (N-linked (GlcNAc...) asparagine). Residue Glu400 participates in a beta-D-glucoside binding. The active-site Nucleophile is the Glu400. The N-linked (GlcNAc...) asparagine glycan is linked to Asn408. A beta-D-glucoside is bound by residues Trp447, 454–455 (EW), and Phe463.

This sequence belongs to the glycosyl hydrolase 1 family.

The enzyme catalyses Hydrolysis of terminal, non-reducing beta-D-glucosyl residues with release of beta-D-glucose.. This chain is Beta-glucosidase 38 (BGLU38), found in Oryza sativa subsp. japonica (Rice).